Consider the following 357-residue polypeptide: Dihydroorotate dehydrogenase (quinone) (357 aa).

FMN contacts are provided by residues 66–70 (AGFDK) and Thr-90. Lys-70 contacts substrate. Residue 115–119 (NRMGF) coordinates substrate. FMN is bound by residues Asn-143 and Asn-176. A substrate-binding site is contributed by Asn-176. Residue Ser-179 is the Nucleophile of the active site. Residue Asn-181 participates in substrate binding. FMN contacts are provided by Lys-212 and Thr-240. 241–242 (NT) is a binding site for substrate. FMN is bound by residues Gly-264, Gly-293, and 314–315 (YT).

This sequence belongs to the dihydroorotate dehydrogenase family. Type 2 subfamily. Monomer. FMN is required as a cofactor.

Its subcellular location is the cell membrane. The catalysed reaction is (S)-dihydroorotate + a quinone = orotate + a quinol. It participates in pyrimidine metabolism; UMP biosynthesis via de novo pathway; orotate from (S)-dihydroorotate (quinone route): step 1/1. In terms of biological role, catalyzes the conversion of dihydroorotate to orotate with quinone as electron acceptor. This Mycobacterium tuberculosis (strain ATCC 25177 / H37Ra) protein is Dihydroorotate dehydrogenase (quinone).